The primary structure comprises 84 residues: uncharacterized protein (84 aa).

The segment at 1-21 (MYYRRQGEPQEMYGNGNNSVS) is disordered. Residues 49-69 (YIIYAIVAAILLLLFWLLYKK) traverse the membrane as a helical segment.

Its subcellular location is the membrane. This is an uncharacterized protein from Invertebrate iridescent virus 6 (IIV-6).